A 481-amino-acid chain; its full sequence is Aspartyl/glutamyl-tRNA(Asn/Gln) amidotransferase subunit B (481 aa).

This sequence belongs to the GatB/GatE family. GatB subfamily. In terms of assembly, heterotrimer of A, B and C subunits.

It carries out the reaction L-glutamyl-tRNA(Gln) + L-glutamine + ATP + H2O = L-glutaminyl-tRNA(Gln) + L-glutamate + ADP + phosphate + H(+). The enzyme catalyses L-aspartyl-tRNA(Asn) + L-glutamine + ATP + H2O = L-asparaginyl-tRNA(Asn) + L-glutamate + ADP + phosphate + 2 H(+). Functionally, allows the formation of correctly charged Asn-tRNA(Asn) or Gln-tRNA(Gln) through the transamidation of misacylated Asp-tRNA(Asn) or Glu-tRNA(Gln) in organisms which lack either or both of asparaginyl-tRNA or glutaminyl-tRNA synthetases. The reaction takes place in the presence of glutamine and ATP through an activated phospho-Asp-tRNA(Asn) or phospho-Glu-tRNA(Gln). This is Aspartyl/glutamyl-tRNA(Asn/Gln) amidotransferase subunit B from Ectopseudomonas mendocina (strain ymp) (Pseudomonas mendocina).